The sequence spans 290 residues: Membrane protein insertase YidC (290 aa).

Residues 1-19 form the signal peptide; sequence MKKKTLLPLFLGIMVFLAG. Cys20 is lipidated: N-palmitoyl cysteine. A lipid anchor (S-diacylglycerol cysteine) is attached at Cys20. The next 5 helical transmembrane spans lie at 56 to 76, 134 to 154, 176 to 196, 207 to 224, and 229 to 251; these read YGLA…PFML, MLGC…YFVL, PDIW…YVSS, GYMM…ISLS, and LGLY…NIYY. The disordered stretch occupies residues 270–290; it reads HNGGSNKKGKNTQVVSKKKKK.

This sequence belongs to the OXA1/ALB3/YidC family. Type 2 subfamily.

It localises to the cell membrane. Its function is as follows. Required for the insertion and/or proper folding and/or complex formation of integral membrane proteins into the membrane. Involved in integration of membrane proteins that insert both dependently and independently of the Sec translocase complex, as well as at least some lipoproteins. The protein is Membrane protein insertase YidC of Staphylococcus aureus (strain MRSA252).